A 739-amino-acid polypeptide reads, in one-letter code: Gamma-tubulin complex component 4 homolog (739 aa).

Belongs to the TUBGCP family.

The protein localises to the cytoplasm. It is found in the cytoskeleton. The protein resides in the microtubule organizing center. In terms of biological role, gamma-tubulin complex is necessary for microtubule nucleation at the microtubule organizing centers (MTOCs). The polypeptide is Gamma-tubulin complex component 4 homolog (85P) (Medicago truncatula (Barrel medic)).